A 184-amino-acid chain; its full sequence is Large ribosomal subunit protein uL18 (184 aa).

Belongs to the universal ribosomal protein uL18 family. In terms of assembly, part of the 50S ribosomal subunit. Contacts the 5S and 23S rRNAs.

Functionally, this is one of the proteins that bind and probably mediate the attachment of the 5S RNA into the large ribosomal subunit, where it forms part of the central protuberance. The polypeptide is Large ribosomal subunit protein uL18 (Natronomonas pharaonis (strain ATCC 35678 / DSM 2160 / CIP 103997 / JCM 8858 / NBRC 14720 / NCIMB 2260 / Gabara) (Halobacterium pharaonis)).